Reading from the N-terminus, the 151-residue chain is D-aminoacyl-tRNA deacylase (151 aa).

The Gly-cisPro motif, important for rejection of L-amino acids signature appears at 136 to 137 (GP).

It belongs to the DTD family. As to quaternary structure, homodimer.

It is found in the cytoplasm. The catalysed reaction is glycyl-tRNA(Ala) + H2O = tRNA(Ala) + glycine + H(+). It carries out the reaction a D-aminoacyl-tRNA + H2O = a tRNA + a D-alpha-amino acid + H(+). Functionally, an aminoacyl-tRNA editing enzyme that deacylates mischarged D-aminoacyl-tRNAs. Also deacylates mischarged glycyl-tRNA(Ala), protecting cells against glycine mischarging by AlaRS. Acts via tRNA-based rather than protein-based catalysis; rejects L-amino acids rather than detecting D-amino acids in the active site. By recycling D-aminoacyl-tRNA to D-amino acids and free tRNA molecules, this enzyme counteracts the toxicity associated with the formation of D-aminoacyl-tRNA entities in vivo and helps enforce protein L-homochirality. The protein is D-aminoacyl-tRNA deacylase of Lactococcus lactis subsp. lactis (strain IL1403) (Streptococcus lactis).